The primary structure comprises 188 residues: Pyridoxal 5'-phosphate synthase subunit PdxT (188 aa).

Gly47–Ser49 lines the L-glutamine pocket. Cys79 functions as the Nucleophile in the catalytic mechanism. L-glutamine contacts are provided by residues Arg106 and Ile134–Arg135. Active-site charge relay system residues include His169 and Glu171.

This sequence belongs to the glutaminase PdxT/SNO family. In the presence of PdxS, forms a dodecamer of heterodimers. Only shows activity in the heterodimer.

The enzyme catalyses aldehydo-D-ribose 5-phosphate + D-glyceraldehyde 3-phosphate + L-glutamine = pyridoxal 5'-phosphate + L-glutamate + phosphate + 3 H2O + H(+). It catalyses the reaction L-glutamine + H2O = L-glutamate + NH4(+). It functions in the pathway cofactor biosynthesis; pyridoxal 5'-phosphate biosynthesis. In terms of biological role, catalyzes the hydrolysis of glutamine to glutamate and ammonia as part of the biosynthesis of pyridoxal 5'-phosphate. The resulting ammonia molecule is channeled to the active site of PdxS. The sequence is that of Pyridoxal 5'-phosphate synthase subunit PdxT from Caldicellulosiruptor saccharolyticus (strain ATCC 43494 / DSM 8903 / Tp8T 6331).